Here is a 90-residue protein sequence, read N- to C-terminus: Cell division topological specificity factor (90 aa).

Belongs to the MinE family.

Functionally, prevents the cell division inhibition by proteins MinC and MinD at internal division sites while permitting inhibition at polar sites. This ensures cell division at the proper site by restricting the formation of a division septum at the midpoint of the long axis of the cell. This is Cell division topological specificity factor from Lachnoclostridium phytofermentans (strain ATCC 700394 / DSM 18823 / ISDg) (Clostridium phytofermentans).